The chain runs to 88 residues: Putative membrane protein insertion efficiency factor (88 aa).

The protein belongs to the UPF0161 family.

Its subcellular location is the cell inner membrane. Functionally, could be involved in insertion of integral membrane proteins into the membrane. The chain is Putative membrane protein insertion efficiency factor from Prochlorococcus marinus (strain MIT 9313).